The chain runs to 316 residues: HPr kinase/phosphorylase (316 aa).

Residues His143 and Lys164 contribute to the active site. 158 to 165 is an ATP binding site; it reads GEAGSGKS. Position 165 (Ser165) interacts with Mg(2+). Asp182 functions as the Proton acceptor; for phosphorylation activity. Proton donor; for dephosphorylation activity in the catalytic mechanism. The segment at 206–215 is important for the catalytic mechanism of both phosphorylation and dephosphorylation; it reads LEVRGLGVLN. Residue Glu207 participates in Mg(2+) binding. Arg251 is a catalytic residue. Residues 272–277 are important for the catalytic mechanism of dephosphorylation; that stretch reads PVMPGR.

Belongs to the HPrK/P family. Homohexamer. Mg(2+) is required as a cofactor.

It carries out the reaction [HPr protein]-L-serine + ATP = [HPr protein]-O-phospho-L-serine + ADP + H(+). The catalysed reaction is [HPr protein]-O-phospho-L-serine + phosphate + H(+) = [HPr protein]-L-serine + diphosphate. In terms of biological role, catalyzes the ATP- as well as the pyrophosphate-dependent phosphorylation of a specific serine residue in HPr, a phosphocarrier protein of the phosphoenolpyruvate-dependent sugar phosphotransferase system (PTS). HprK/P also catalyzes the pyrophosphate-producing, inorganic phosphate-dependent dephosphorylation (phosphorolysis) of seryl-phosphorylated HPr (P-Ser-HPr). The protein is HPr kinase/phosphorylase of Xanthomonas campestris pv. campestris (strain 8004).